The sequence spans 306 residues: IN2-2 protein (306 aa).

Catalysis depends on tyrosine 64, which acts as the Proton donor. Histidine 131 contacts substrate. An NADP(+)-binding site is contributed by 210–220; sequence SPLGRGFFSSG. The interval 272 to 306 is disordered; that stretch reads LGSPPRKRRLPHTWHNKNRQLQPERGGTVCEAYTG. The span at 276-289 shows a compositional bias: basic residues; sequence PRKRRLPHTWHNKN.

It belongs to the aldo/keto reductase family. Aldo/keto reductase 2 subfamily. Leaves and roots.

In Zea mays (Maize), this protein is IN2-2 protein (IN2-2).